The primary structure comprises 147 residues: Large ribosomal subunit protein uL13 (147 aa).

Belongs to the universal ribosomal protein uL13 family. As to quaternary structure, part of the 50S ribosomal subunit.

In terms of biological role, this protein is one of the early assembly proteins of the 50S ribosomal subunit, although it is not seen to bind rRNA by itself. It is important during the early stages of 50S assembly. This is Large ribosomal subunit protein uL13 from Micrococcus luteus (strain ATCC 4698 / DSM 20030 / JCM 1464 / CCM 169 / CCUG 5858 / IAM 1056 / NBRC 3333 / NCIMB 9278 / NCTC 2665 / VKM Ac-2230) (Micrococcus lysodeikticus).